Reading from the N-terminus, the 267-residue chain is 3-deoxy-manno-octulosonate cytidylyltransferase 2 (267 aa).

It belongs to the KdsB family.

Its subcellular location is the cytoplasm. It carries out the reaction 3-deoxy-alpha-D-manno-oct-2-ulosonate + CTP = CMP-3-deoxy-beta-D-manno-octulosonate + diphosphate. It participates in nucleotide-sugar biosynthesis; CMP-3-deoxy-D-manno-octulosonate biosynthesis; CMP-3-deoxy-D-manno-octulosonate from 3-deoxy-D-manno-octulosonate and CTP: step 1/1. The protein operates within bacterial outer membrane biogenesis; lipopolysaccharide biosynthesis. In terms of biological role, activates KDO (a required 8-carbon sugar) for incorporation into bacterial lipopolysaccharide in Gram-negative bacteria. This chain is 3-deoxy-manno-octulosonate cytidylyltransferase 2, found in Burkholderia ambifaria (strain MC40-6).